Reading from the N-terminus, the 282-residue chain is DegV domain-containing protein SpyM3_0586 (282 aa).

The DegV domain maps to 3–280 (LAVITDSTAT…EGAIAFGVTP (278 aa)). The hexadecanoate site is built by Thr-61 and Ser-94.

Functionally, may bind long-chain fatty acids, such as palmitate, and may play a role in lipid transport or fatty acid metabolism. This is DegV domain-containing protein SpyM3_0586 from Streptococcus pyogenes serotype M3 (strain ATCC BAA-595 / MGAS315).